Consider the following 87-residue polypeptide: Small ribosomal subunit protein bS20 (87 aa).

This sequence belongs to the bacterial ribosomal protein bS20 family.

Functionally, binds directly to 16S ribosomal RNA. This chain is Small ribosomal subunit protein bS20, found in Rickettsia bellii (strain OSU 85-389).